Reading from the N-terminus, the 120-residue chain is Large ribosomal subunit protein bL19 (120 aa).

The protein belongs to the bacterial ribosomal protein bL19 family.

Functionally, this protein is located at the 30S-50S ribosomal subunit interface and may play a role in the structure and function of the aminoacyl-tRNA binding site. The protein is Large ribosomal subunit protein bL19 of Microcystis aeruginosa (strain NIES-843 / IAM M-2473).